We begin with the raw amino-acid sequence, 194 residues long: MSSLLDIIYQLRQVPRWDGSFQFEKEDVSQHSFSVIAISHILCELKETLEGKKINKEKLLLYALYHDVTEVVSTHIISPVKKNSILKDPFNAFREQIKNSLFDNLPITLSDTLSTILNNNDLEIQEIVEHADHVDAYCKSCIEVHRGNKDFISIQRSLGDKLDNLTKEYPYLKEFQNLFLKDFPLENKNYRYLN.

4'-phosphooxetanocin A-binding residues include arginine 16 and tryptophan 17. Tryptophan 17 serves as a coordination point for oxetanocin A. Mg(2+) is bound by residues histidine 31, histidine 66, and aspartate 67. 4'-phosphooxetanocin A contacts are provided by histidine 75, serine 78, and lysine 81. Positions 75 and 78 each coordinate oxetanocin A. Aspartate 132 is a binding site for Mg(2+).

It belongs to the 5DNU family. Homodimer. It depends on Mg(2+) as a cofactor. The cofactor is Co(2+). Mn(2+) serves as cofactor.

It carries out the reaction 4'-phosphooxetanocin A + H2O = oxetanocin A + phosphate. In terms of biological role, phosphohydrolase involved in the biosynthesis of oxetanocin A (OXT-A), a nucleoside analog with antitumor, antiviral and antibacterial properties. Catalyzes the hydrolysis of phosphooxetanocin A (OXT-A-P) to generate oxetanocin A (OXT-A) and a molecule of inorganic phosphate. Can also bind and hydrolyze OXT triphosphate (OXT-A-PPP) and OXT diphosphate (OXT-A-PP), and thus catalyze the sequential hydrolysis of tri-, di- and mono-phosphorylated oxetanocin A compounds, releasing one molecule of inorganic phosphate at a time. In vitro can also use dATP, dAMP and dADP. The protein is 4'-phosphooxetanocin A phosphatase of Priestia megaterium (Bacillus megaterium).